The primary structure comprises 240 residues: ATP-dependent dethiobiotin synthetase BioD (240 aa).

15 to 20 (EIGKTF) serves as a coordination point for ATP. Residue Thr19 participates in Mg(2+) binding. Lys40 is an active-site residue. ATP is bound by residues Asp57, 118–121 (EGVG), and 178–179 (NR). Residues Asp57 and Glu118 each contribute to the Mg(2+) site.

This sequence belongs to the dethiobiotin synthetase family. Homodimer. The cofactor is Mg(2+).

The protein localises to the cytoplasm. It carries out the reaction (7R,8S)-7,8-diammoniononanoate + CO2 + ATP = (4R,5S)-dethiobiotin + ADP + phosphate + 3 H(+). It functions in the pathway cofactor biosynthesis; biotin biosynthesis; biotin from 7,8-diaminononanoate: step 1/2. Its function is as follows. Catalyzes a mechanistically unusual reaction, the ATP-dependent insertion of CO2 between the N7 and N8 nitrogen atoms of 7,8-diaminopelargonic acid (DAPA, also called 7,8-diammoniononanoate) to form a ureido ring. In Burkholderia thailandensis (strain ATCC 700388 / DSM 13276 / CCUG 48851 / CIP 106301 / E264), this protein is ATP-dependent dethiobiotin synthetase BioD.